Reading from the N-terminus, the 467-residue chain is tRNA-2-methylthio-N(6)-dimethylallyladenosine synthase (467 aa).

An MTTase N-terminal domain is found at 15-135; the sequence is KKIFVKTYGC…LPEYVARLAN (121 aa). [4Fe-4S] cluster contacts are provided by cysteine 24, cysteine 60, cysteine 98, cysteine 177, cysteine 181, and cysteine 184. The region spanning 163–395 is the Radical SAM core domain; sequence LARGATAFLT…QALLGEQQLA (233 aa). Positions 398 to 461 constitute a TRAM domain; that stretch reads AGCAGRTMPV…RNSLRGRLRE (64 aa).

This sequence belongs to the methylthiotransferase family. MiaB subfamily. As to quaternary structure, monomer. It depends on [4Fe-4S] cluster as a cofactor.

It localises to the cytoplasm. The catalysed reaction is N(6)-dimethylallyladenosine(37) in tRNA + (sulfur carrier)-SH + AH2 + 2 S-adenosyl-L-methionine = 2-methylsulfanyl-N(6)-dimethylallyladenosine(37) in tRNA + (sulfur carrier)-H + 5'-deoxyadenosine + L-methionine + A + S-adenosyl-L-homocysteine + 2 H(+). Catalyzes the methylthiolation of N6-(dimethylallyl)adenosine (i(6)A), leading to the formation of 2-methylthio-N6-(dimethylallyl)adenosine (ms(2)i(6)A) at position 37 in tRNAs that read codons beginning with uridine. The chain is tRNA-2-methylthio-N(6)-dimethylallyladenosine synthase from Parvibaculum lavamentivorans (strain DS-1 / DSM 13023 / NCIMB 13966).